A 332-amino-acid chain; its full sequence is tRNA U34 carboxymethyltransferase (332 aa).

Residues K96, W110, K115, G135, 157–159 (DPT), 190–191 (IE), M205, Y209, and R324 each bind carboxy-S-adenosyl-L-methionine.

It belongs to the class I-like SAM-binding methyltransferase superfamily. CmoB family. In terms of assembly, homotetramer.

The enzyme catalyses carboxy-S-adenosyl-L-methionine + 5-hydroxyuridine(34) in tRNA = 5-carboxymethoxyuridine(34) in tRNA + S-adenosyl-L-homocysteine + H(+). In terms of biological role, catalyzes carboxymethyl transfer from carboxy-S-adenosyl-L-methionine (Cx-SAM) to 5-hydroxyuridine (ho5U) to form 5-carboxymethoxyuridine (cmo5U) at position 34 in tRNAs. This Alteromonas mediterranea (strain DSM 17117 / CIP 110805 / LMG 28347 / Deep ecotype) protein is tRNA U34 carboxymethyltransferase.